Here is a 460-residue protein sequence, read N- to C-terminus: Serine/threonine-protein kinase UL13 (460 aa).

Residues 1 to 37 (MATRGRPGAKQVADHSVSDGGEQRRIPQKPPGPERCD) are disordered. A compositionally biased stretch (basic and acidic residues) spans 12–25 (VADHSVSDGGEQRR). Positions 95 to 460 (LEPYRFLGRG…DVRRTVSALA (366 aa)) constitute a Protein kinase domain. Residues 101–109 (LGRGGYGSV) and Lys120 contribute to the ATP site. Asp219 acts as the Proton acceptor in catalysis.

Belongs to the protein kinase superfamily. Ser/Thr protein kinase family. Post-translationally, autophosphorylated.

The protein resides in the virion tegument. Its subcellular location is the host nucleus. It catalyses the reaction L-seryl-[protein] + ATP = O-phospho-L-seryl-[protein] + ADP + H(+). The catalysed reaction is L-threonyl-[protein] + ATP = O-phospho-L-threonyl-[protein] + ADP + H(+). In terms of biological role, multifunctional serine/threonine kinase that plays a role in several processes including egress of virus particles from the nucleus, modulation of the actin cytoskeleton and regulation of viral and cellular gene expression. Regulates the nuclear localization of viral envelopment factors UL34 and UL31 homologs, by phosphorylating the US3 kinase homolog, indicating a role in nuclear egress. Disrupts host nuclear lamins, including LMNA and LMNB1. Phosphorylates the viral Fc receptor composed of glycoproteins E (gE) and I (gI). Phosphorylation of glycoprotein E (gE) by UL13 homolog alters its subcellular localization, from the host early endosome to the plasma membrane. Participates in the transcriptional regulation of cellular and viral mRNAs mainly by phosphorylating the viral transcriptional regulator ICP22 homolog. In Amazona oratrix (yellow-headed parrot), this protein is Serine/threonine-protein kinase UL13 (UL13).